The following is a 2383-amino-acid chain: Highly reducing polyketide synthase SAT13 (2383 aa).

Positions 6-433 constitute a Ketosynthase family 3 (KS3) domain; sequence PVPLAIVGIA…GTNAHAVLER (428 aa). Residues Cys-180, His-315, and His-355 each act as for beta-ketoacyl synthase activity in the active site. The malonyl-CoA:ACP transacylase (MAT) domain stretch occupies residues 536–828; that stretch reads FIFTGQGAQW…IGPHSALAGP (293 aa). Ser-626 functions as the For malonyltransferase activity in the catalytic mechanism. Positions 922–1062 are N-terminal hotdog fold; that stretch reads HDLLGLRMTE…GNIVVVFKTS (141 aa). A dehydratase (DH) domain region spans residues 922–1239; the sequence is HDLLGLRMTE…GMELRSFVAR (318 aa). The PKS/mFAS DH domain occupies 922-1242; the sequence is HDLLGLRMTE…LRSFVARDSN (321 aa). His-954 acts as the Proton acceptor; for dehydratase activity in catalysis. The segment at 1087-1242 is C-terminal hotdog fold; it reads GKLTHAGQLY…LRSFVARDSN (156 aa). Asp-1152 acts as the Proton donor; for dehydratase activity in catalysis. Positions 1669-1977 are enoylreductase (ER) domain; it reads DGQNRLVFVE…KQGSMKKCVL (309 aa). Positions 2001–2184 are catalytic ketoreductase (KRc) domain; sequence ATYVVAGGLG…MSLNIGGIKD (184 aa). The region spanning 2287–2364 is the Carrier domain; sequence EISEFVARSI…DLAQKVVSRS (78 aa). The residue at position 2324 (Ser-2324) is an O-(pantetheine 4'-phosphoryl)serine.

Its pathway is mycotoxin biosynthesis. Highly reducing polyketide synthase; part of the satratoxin SC2 cluster involved in the biosynthesis of satratoxins, trichothecene mycotoxins that are associated with human food poisonings. Satratoxins are suggested to be made by products of multiple gene clusters (SC1, SC2 and SC3) that encode 21 proteins in all, including polyketide synthases, acetyltransferases, and other enzymes expected to modify the trichothecene skeleton. SC1 encodes 10 proteins, SAT1 to SAT10. The largest are SAT8, which encodes a putative polyketide synthase (PKS) with a conventional non-reducing architecture, and SAT10, a putative protein containing four ankyrin repeats and thus may be involved in protein scaffolding. The putative short-chain reductase SAT3 may assist the PKS in some capacity. SAT6 contains a secretory lipase domain and acts probably as a trichothecene esterase. SAT5 encodes a putative acetyltransferase, and so, with SAT6, may affect endogenous protection from toxicity. The probable transcription factor SAT9 may regulate the expression of the SC1 cluster. SC2 encodes proteins SAT11 to SAT16, the largest of which encodes the putative reducing PKS SAT13. SAT11 is a cytochrome P450 monooxygenase, while SAT14 and SAT16 are probable acetyltransferases. The SC2 cluster may be regulated by the transcription factor SAT15. SC3 is a small cluster that encodes 5 proteins, SAT17 to SAT21. SAT21 is a putative MFS-type transporter which may have a role in exporting secondary metabolites. The four other proteins putatively encoded in SC3 include the taurine hydroxylase-like protein SAT17, the O-methyltransferase SAT18, the acetyltransferase SAT19, and the Cys6-type zinc finger SAT20, the latter being probably involved in regulation of SC3 expression. The protein is Highly reducing polyketide synthase SAT13 of Stachybotrys chartarum (strain CBS 109288 / IBT 7711) (Toxic black mold).